Consider the following 321-residue polypeptide: Glucokinase (321 aa).

Residue 8–13 coordinates ATP; it reads GDVGGT.

The protein belongs to the bacterial glucokinase family.

The protein localises to the cytoplasm. The catalysed reaction is D-glucose + ATP = D-glucose 6-phosphate + ADP + H(+). The chain is Glucokinase from Salmonella choleraesuis (strain SC-B67).